The chain runs to 401 residues: Ninja-family protein MODD (401 aa).

Disordered regions lie at residues 95 to 135 (KQGV…GEGR) and 215 to 238 (TGNKKTGGNVNHSSDRNRCTGLPP). The span at 105–130 (RPSGGAEAEPAAARLPASGSPSSGSS) shows a compositional bias: low complexity. The segment covering 217–226 (NKKTGGNVNH) has biased composition (polar residues).

The protein belongs to the Ninja family. In terms of assembly, interacts with BZIP46, TPR3 and PUB70.

The protein localises to the nucleus. In terms of biological role, acts as a negative regulator of abscisic acid (ABA) signaling and drought tolerance. Mediates deactivation and degradation of BZIP46, a positive regulator of ABA signaling and drought stress tolerance. Represses BZIP46 activity via interaction with the TPR3-HDAC1 corepressor complex and down-regulation of the histone acetylation level at BZIP46 target genes. Promotes BZIP46 degradation via interaction with the U-box type ubiquitin E3 ligase PUB70. This Oryza sativa subsp. japonica (Rice) protein is Ninja-family protein MODD.